The following is a 64-amino-acid chain: Large ribosomal subunit protein bL28 (64 aa).

It belongs to the bacterial ribosomal protein bL28 family.

The polypeptide is Large ribosomal subunit protein bL28 (Desulfotalea psychrophila (strain LSv54 / DSM 12343)).